The primary structure comprises 360 residues: MSLSRLHIESFRNISSAQLQPGDGLNLIYGHNGSGKTSILEAIYFLGMGRSFRSHLSQRVIKNDDDALTLFANMESGDEQSKIGLRRFRSGDIEVKINGDKVKRLSTLAETLPIQVITPESFSLLFEGPKSRRQFIDWGAFHSDPRFYAAWVNVRRILKQRNQLLRDGSPYSSIQFWDKEFIRYAELVTDIRKQYVDSLNELLKGIIGEFLPQVDVKVSFTRGWDAKTEYAQLLETQYPRDLATGYTVSGPHKADLRLRVGTLPAQDALSRGQLKLLVCALRIAQGKLLKQQIDKKSIYLVDDLPSELDAKHRKLLLQQLADTGAQVFVTAIEPAAIVDSLITPPSKMFHVEQGRVTVIE.

Position 30–37 (30–37 (GHNGSGKT)) interacts with ATP.

This sequence belongs to the RecF family.

The protein localises to the cytoplasm. In terms of biological role, the RecF protein is involved in DNA metabolism; it is required for DNA replication and normal SOS inducibility. RecF binds preferentially to single-stranded, linear DNA. It also seems to bind ATP. This chain is DNA replication and repair protein RecF, found in Shewanella pealeana (strain ATCC 700345 / ANG-SQ1).